Consider the following 181-residue polypeptide: ATP-dependent protease subunit HslV (181 aa).

Threonine 6 is an active-site residue. Residues alanine 162, cysteine 165, and threonine 168 each contribute to the Na(+) site.

This sequence belongs to the peptidase T1B family. HslV subfamily. In terms of assembly, a double ring-shaped homohexamer of HslV is capped on each side by a ring-shaped HslU homohexamer. The assembly of the HslU/HslV complex is dependent on binding of ATP.

The protein resides in the cytoplasm. It catalyses the reaction ATP-dependent cleavage of peptide bonds with broad specificity.. Allosterically activated by HslU binding. In terms of biological role, protease subunit of a proteasome-like degradation complex believed to be a general protein degrading machinery. This is ATP-dependent protease subunit HslV from Solidesulfovibrio magneticus (strain ATCC 700980 / DSM 13731 / RS-1) (Desulfovibrio magneticus).